Here is a 1123-residue protein sequence, read N- to C-terminus: Eukaryotic translation initiation factor 2-alpha kinase PK4 (1123 aa).

A disordered region spans residues 1 to 30; it reads MKKRIRSSYKVGSSNKYHKKNYTDNEKDKK. Over residues 21-30 the composition is skewed to basic and acidic residues; the sequence is NYTDNEKDKK. ATP-binding positions include 245-253 and K270; that span reads IGQGGFGSV. 3 disordered regions span residues 409–493, 572–609, and 742–800; these read FYSD…NDEG, RNED…NELD, and ENDD…DDDI. Residues 419–428 are compositionally biased toward basic and acidic residues; sequence KNKENPEKNH. Residues 455 to 477 are compositionally biased toward basic residues; it reads HKLKKRKNKKKKSKKKRKSKSKI. 5 consecutive repeat copies span residues 576–582, 583–589, 590–596, 597–603, and 604–610. Residues 576–610 are 5 X 7 AA tandem repeat of D-K-N-[GE]-L-D-[GD]; sequence DKNGLDGDKNGLDGDKNGLDGDKNGLDGDKNELDD. The 372-residue stretch at 678 to 1049 folds into the Protein kinase domain; the sequence is TNVESINTNG…KIKVLLDPHL (372 aa). Residues 743–754 show a composition bias toward acidic residues; sequence NDDDDDDDDDDN. D886 (proton acceptor) is an active-site residue. At T953 the chain carries Phosphothreonine.

The protein belongs to the protein kinase superfamily. Ser/Thr protein kinase family. GCN2 subfamily. May form oligomers in response to stress; oligomerization may result in catalytic activity. Interacts with BIP; the interaction is disrupted in response to stress. Post-translationally, auto-phosphorylated.

It is found in the endoplasmic reticulum membrane. It carries out the reaction L-seryl-[protein] + ATP = O-phospho-L-seryl-[protein] + ADP + H(+). The enzyme catalyses L-threonyl-[protein] + ATP = O-phospho-L-threonyl-[protein] + ADP + H(+). Its activity is regulated as follows. Dissociation from BIP and oligomerization, may results autophosphorylation and kinase activity induction. In terms of biological role, during the asexual blood stage, phosphorylates translation factor eIF2alpha in late schizonts resulting in protein translation inhibition. Plays a role in trophozoite differentiation into schizonts. This Plasmodium falciparum protein is Eukaryotic translation initiation factor 2-alpha kinase PK4.